The primary structure comprises 652 residues: DNA ligase (652 aa).

NAD(+)-binding positions include 29 to 33 (DSEYD), 78 to 79 (SL), and Glu-107. The active-site N6-AMP-lysine intermediate is the Lys-109. Residues Arg-130, Glu-164, Lys-278, and Lys-302 each contribute to the NAD(+) site. Cys-395, Cys-398, Cys-413, and Cys-418 together coordinate Zn(2+). In terms of domain architecture, BRCT spans 577 to 652 (AADAALSGMT…IRDEDWLDSL (76 aa)).

It belongs to the NAD-dependent DNA ligase family. LigA subfamily. It depends on Mg(2+) as a cofactor. Mn(2+) serves as cofactor.

It catalyses the reaction NAD(+) + (deoxyribonucleotide)n-3'-hydroxyl + 5'-phospho-(deoxyribonucleotide)m = (deoxyribonucleotide)n+m + AMP + beta-nicotinamide D-nucleotide.. DNA ligase that catalyzes the formation of phosphodiester linkages between 5'-phosphoryl and 3'-hydroxyl groups in double-stranded DNA using NAD as a coenzyme and as the energy source for the reaction. It is essential for DNA replication and repair of damaged DNA. The chain is DNA ligase from Streptococcus sanguinis (strain SK36).